A 159-amino-acid polypeptide reads, in one-letter code: Phosphopantetheine adenylyltransferase (159 aa).

Residue Thr-10 participates in substrate binding. Residues 10–11 and His-18 contribute to the ATP site; that span reads TF. Substrate-binding residues include Lys-42, Met-74, and Arg-88. ATP contacts are provided by residues 89 to 91, Glu-99, and 124 to 130; these read GLR and WSFISSS.

This sequence belongs to the bacterial CoaD family. In terms of assembly, homohexamer. The cofactor is Mg(2+).

It localises to the cytoplasm. The enzyme catalyses (R)-4'-phosphopantetheine + ATP + H(+) = 3'-dephospho-CoA + diphosphate. It functions in the pathway cofactor biosynthesis; coenzyme A biosynthesis; CoA from (R)-pantothenate: step 4/5. Its function is as follows. Reversibly transfers an adenylyl group from ATP to 4'-phosphopantetheine, yielding dephospho-CoA (dPCoA) and pyrophosphate. The polypeptide is Phosphopantetheine adenylyltransferase (Salmonella typhimurium (strain LT2 / SGSC1412 / ATCC 700720)).